We begin with the raw amino-acid sequence, 285 residues long: Phospholipid phosphatase 1 (285 aa).

The Cytoplasmic portion of the chain corresponds to 1–6 (MFDKTR). The PDZ-binding; involved in localization to the apical cell membrane motif lies at 5-7 (TRL). Residues 7–27 (LPYVALDVLCVLLAGLPFAIL) form a helical membrane-spanning segment. Over 28–53 (TSRHTPFQRGLFCNDESIKYPYKEDT) the chain is Extracellular. Residues 54 to 74 (IPYPLLGGIIIPFSIIVMIVG) form a helical membrane-spanning segment. Residues 75–94 (ETLSVYFNLLHSNSFIRNNY) are Cytoplasmic-facing. The chain crosses the membrane as a helical span at residues 95 to 115 (IATIYKAIGTFLFGAAASQSL). At 116 to 164 (TDIAKYSIGRLRPHFLDVCDPDWSKINCSDGYIENYICRGNAQKVKEGR) the chain is on the extracellular side. The interval 120-128 (KYSIGRLRP) is phosphatase sequence motif I. Asn142 carries N-linked (GlcNAc...) asparagine glycosylation. A helical membrane pass occupies residues 165-185 (LSFYSGHSSFSMYCMLFVALY). A phosphatase sequence motif II region spans residues 168–171 (YSGH). The Proton donors role is filled by His171. The Cytoplasmic segment spans residues 186 to 196 (LQARMKGDWAR). The helical transmembrane segment at 197–216 (LLRPTLQFGLVAVSIYVGLS) threads the bilayer. The phosphatase sequence motif III stretch occupies residues 216 to 227 (SRVSDYKHHWSD). Residues 217–229 (RVSDYKHHWSDVL) are Extracellular-facing. His223 serves as the catalytic Nucleophile. A helical transmembrane segment spans residues 230–250 (TGLIQGALVAIVVAVYVSDFF). The Cytoplasmic segment spans residues 251-285 (KERNSPFKERKEEDSHTTLHETPTTGNHYRNSHQP). Positions 257–269 (FKERKEEDSHTTL) are enriched in basic and acidic residues. Residues 257 to 285 (FKERKEEDSHTTLHETPTTGNHYRNSHQP) are disordered. The span at 270 to 285 (HETPTTGNHYRNSHQP) shows a compositional bias: polar residues.

The protein belongs to the PA-phosphatase related phosphoesterase family. Forms functional homodimers and homooligomers that are not required for substrate recognition and catalytic activity. Can also form heterooligomers with PLPP2 and PLPP3. In terms of processing, N-glycosylated. N-linked sugars are of the complex type. N-glycosylation is not required for the phosphatase activity.

The protein resides in the cell membrane. Its subcellular location is the apical cell membrane. It is found in the membrane raft. The protein localises to the membrane. It localises to the caveola. It catalyses the reaction a 1,2-diacyl-sn-glycero-3-phosphate + H2O = a 1,2-diacyl-sn-glycerol + phosphate. The catalysed reaction is 1,2-dihexadecanoyl-sn-glycero-3-phosphate + H2O = 1,2-dihexadecanoyl-sn-glycerol + phosphate. The enzyme catalyses 1,2-di-(9Z-octadecenoyl)-sn-glycero-3-phosphate + H2O = 1,2-di-(9Z-octadecenoyl)-sn-glycerol + phosphate. It carries out the reaction a monoacyl-sn-glycero-3-phosphate + H2O = a monoacylglycerol + phosphate. It catalyses the reaction (9Z)-octadecenoyl-sn-glycero-3-phosphate + H2O = (9Z-octadecenoyl)-glycerol + phosphate. The catalysed reaction is a 1-acyl-sn-glycero-3-phosphate + H2O = a 1-acyl-sn-glycerol + phosphate. The enzyme catalyses 1-(9Z-octadecenoyl)-sn-glycero-3-phosphate + H2O = 1-(9Z-octadecenoyl)-sn-glycerol + phosphate. It carries out the reaction a 1,2-diacyl-sn-glycerol 3-diphosphate + H2O = a 1,2-diacyl-sn-glycero-3-phosphate + phosphate + H(+). It catalyses the reaction sphing-4-enine 1-phosphate + H2O = sphing-4-enine + phosphate. The catalysed reaction is an N-acylsphing-4-enine 1-phosphate + H2O = an N-acylsphing-4-enine + phosphate. The enzyme catalyses N-(octanoyl)-sphing-4-enine-1-phosphate + H2O = N-octanoylsphing-4-enine + phosphate. It carries out the reaction N-(9Z-octadecenoyl)-ethanolamine phosphate + H2O = N-(9Z-octadecenoyl) ethanolamine + phosphate. It catalyses the reaction 1-hexadecanoyl-2-(9Z-octadecenoyl)-sn-glycero-3-phosphate + H2O = 1-hexadecanoyl-2-(9Z-octadecenoyl)-sn-glycerol + phosphate. It functions in the pathway lipid metabolism; phospholipid metabolism. Its activity is regulated as follows. Magnesium-independent phospholipid phosphatase. Insensitive to N-ethylmaleimide. Its function is as follows. Magnesium-independent phospholipid phosphatase of the plasma membrane that catalyzes the dephosphorylation of a variety of glycerolipid and sphingolipid phosphate esters including phosphatidate/PA, lysophosphatidate/LPA, diacylglycerol pyrophosphate/DGPP, sphingosine 1-phosphate/S1P and ceramide 1-phosphate/C1P. Also acts on N-oleoyl ethanolamine phosphate/N-(9Z-octadecenoyl)-ethanolamine phosphate, a potential physiological compound. Through its extracellular phosphatase activity allows both the hydrolysis and the cellular uptake of these bioactive lipid mediators from the milieu, regulating signal transduction in different cellular processes. It is for instance essential for the extracellular hydrolysis of S1P and subsequent conversion into intracellular S1P. Involved in the regulation of inflammation, platelets activation, cell proliferation and migration among other processes. May also have an intracellular activity to regulate phospholipid-mediated signaling pathways. This Sus scrofa (Pig) protein is Phospholipid phosphatase 1.